A 98-amino-acid chain; its full sequence is Large ribosomal subunit protein uL23 (98 aa).

The protein belongs to the universal ribosomal protein uL23 family. As to quaternary structure, part of the 50S ribosomal subunit. Contacts protein L29, and trigger factor when it is bound to the ribosome.

One of the early assembly proteins it binds 23S rRNA. One of the proteins that surrounds the polypeptide exit tunnel on the outside of the ribosome. Forms the main docking site for trigger factor binding to the ribosome. The polypeptide is Large ribosomal subunit protein uL23 (Bifidobacterium animalis subsp. lactis (strain AD011)).